Consider the following 124-residue polypeptide: Chorion class high-cysteine HCA protein 12 (124 aa).

Positions Met1–Gly21 are cleaved as a signal peptide. Residues Gln22–Gly35 are left arm. Residues Cys36 to Ile83 are central domain. The interval Cys84 to Cys124 is right arm (Gly- and Cys-rich tandem repeats).

The protein belongs to the chorion protein family.

In terms of biological role, this protein is one of many from the eggshell of the silk moth. In Bombyx mori (Silk moth), this protein is Chorion class high-cysteine HCA protein 12.